The primary structure comprises 417 residues: Gamma-glutamyl phosphate reductase (417 aa).

This sequence belongs to the gamma-glutamyl phosphate reductase family.

The protein resides in the cytoplasm. It carries out the reaction L-glutamate 5-semialdehyde + phosphate + NADP(+) = L-glutamyl 5-phosphate + NADPH + H(+). Its pathway is amino-acid biosynthesis; L-proline biosynthesis; L-glutamate 5-semialdehyde from L-glutamate: step 2/2. Catalyzes the NADPH-dependent reduction of L-glutamate 5-phosphate into L-glutamate 5-semialdehyde and phosphate. The product spontaneously undergoes cyclization to form 1-pyrroline-5-carboxylate. In Heliobacterium modesticaldum (strain ATCC 51547 / Ice1), this protein is Gamma-glutamyl phosphate reductase.